The sequence spans 359 residues: GTP cyclohydrolase FolE2 (359 aa).

Belongs to the GTP cyclohydrolase IV family.

It catalyses the reaction GTP + H2O = 7,8-dihydroneopterin 3'-triphosphate + formate + H(+). Its pathway is cofactor biosynthesis; 7,8-dihydroneopterin triphosphate biosynthesis; 7,8-dihydroneopterin triphosphate from GTP: step 1/1. Converts GTP to 7,8-dihydroneopterin triphosphate. This chain is GTP cyclohydrolase FolE2, found in Cereibacter sphaeroides (strain ATCC 17029 / ATH 2.4.9) (Rhodobacter sphaeroides).